The chain runs to 621 residues: MPPYPLLHRIDSPFDLRKLDRRELPALAAELRAFLIESVSKTGGHLSSNLGTVELSIALHYIFDTPEDRIVWDVGHQTYGHKILTGRREAMSRLRQFGGISGFPRRSESSYDTFGTAHSSTSISAALGMAVAARNRGEQRRSIAVIGDGAMSAGMAFEALNNAGDMRDINLLVILNDNEMSISPPVGALTKILARMFSGRTYNAARRAGEKVLGVSPPMLDFARKVEEHVKGLITPGTLFEEFGFHYYGPIDGHDLDALIPTLQNLRKLNGPHFLHVITRKGQGYKLAEADPVLYHGVSTFDHTAGIQTAKGAAKLTYTQVFGDWLCDIAAQDEKVIGITPAMREGSGMVRFAQEFPNRYYDVGIAEQHALTFAAGLACEGFKPVVAIYSTFLQRAYDQLIHDIALQNLPVMFAIDRAGLVGADGATHHGAFDLSYLGCIPNLVVMAPADENECRQMLYTAYRHNGPAAVRYPRGGGMQVGPETAMSALPIGKGEIRRSGHRIALLVFGSLLFNALQAAEQLDATVANMRFVKPLDVTLIEELAASHDLLVTLEENIVIGGAGSEVARVLESLSDRPQLLRLGLPDTFIDHGDQSQLLESVGLDAPGIVAAIRRRFSPDNN.

Residues H76 and 117-119 (AHS) contribute to the thiamine diphosphate site. D148 is a binding site for Mg(2+). Thiamine diphosphate contacts are provided by residues 149-150 (GA), N178, Y285, and E367. N178 is a binding site for Mg(2+).

This sequence belongs to the transketolase family. DXPS subfamily. Homodimer. It depends on Mg(2+) as a cofactor. Thiamine diphosphate is required as a cofactor.

The enzyme catalyses D-glyceraldehyde 3-phosphate + pyruvate + H(+) = 1-deoxy-D-xylulose 5-phosphate + CO2. Its pathway is metabolic intermediate biosynthesis; 1-deoxy-D-xylulose 5-phosphate biosynthesis; 1-deoxy-D-xylulose 5-phosphate from D-glyceraldehyde 3-phosphate and pyruvate: step 1/1. Catalyzes the acyloin condensation reaction between C atoms 2 and 3 of pyruvate and glyceraldehyde 3-phosphate to yield 1-deoxy-D-xylulose-5-phosphate (DXP). The chain is 1-deoxy-D-xylulose-5-phosphate synthase from Aromatoleum aromaticum (strain DSM 19018 / LMG 30748 / EbN1) (Azoarcus sp. (strain EbN1)).